A 504-amino-acid chain; its full sequence is ATP synthase subunit alpha (504 aa).

Residue 169 to 176 (GDRQTGKT) coordinates ATP.

It belongs to the ATPase alpha/beta chains family. As to quaternary structure, F-type ATPases have 2 components, CF(1) - the catalytic core - and CF(0) - the membrane proton channel. CF(1) has five subunits: alpha(3), beta(3), gamma(1), delta(1), epsilon(1). CF(0) has three main subunits: a(1), b(2) and c(9-12). The alpha and beta chains form an alternating ring which encloses part of the gamma chain. CF(1) is attached to CF(0) by a central stalk formed by the gamma and epsilon chains, while a peripheral stalk is formed by the delta and b chains.

The protein localises to the cell membrane. It carries out the reaction ATP + H2O + 4 H(+)(in) = ADP + phosphate + 5 H(+)(out). In terms of biological role, produces ATP from ADP in the presence of a proton gradient across the membrane. The alpha chain is a regulatory subunit. In Clostridium kluyveri (strain ATCC 8527 / DSM 555 / NBRC 12016 / NCIMB 10680 / K1), this protein is ATP synthase subunit alpha.